A 715-amino-acid chain; its full sequence is Polyribonucleotide nucleotidyltransferase (715 aa).

Positions 485 and 491 each coordinate Mg(2+). Residues 552–611 (PRIHTMKIDPKKIKDVIGKGGAVIRALTEETGTSIDIDDDGTVKIAATDNNAAKAVMARI) enclose the KH domain. The S1 motif domain occupies 621 to 689 (NAIYKGKVTR…RQNRIRLTMK (69 aa)). The segment at 695 to 715 (TPVAENVTEEAEVSSEQQAEI) is disordered.

It belongs to the polyribonucleotide nucleotidyltransferase family. Component of the RNA degradosome, which is a multiprotein complex involved in RNA processing and mRNA degradation. It depends on Mg(2+) as a cofactor.

Its subcellular location is the cytoplasm. It catalyses the reaction RNA(n+1) + phosphate = RNA(n) + a ribonucleoside 5'-diphosphate. Functionally, involved in mRNA degradation. Catalyzes the phosphorolysis of single-stranded polyribonucleotides processively in the 3'- to 5'-direction. This Actinobacillus pleuropneumoniae serotype 3 (strain JL03) protein is Polyribonucleotide nucleotidyltransferase.